The sequence spans 462 residues: NAD-capped RNA hydrolase NUDT12 (462 aa).

ANK repeat units lie at residues 11–40 (EIVT…SLLN), 45–74 (NGWT…DRSI), and 78–98 (SRQT…ANLL). Residue Lys185 is modified to N6-succinyllysine. Positions 284 and 287 each coordinate Zn(2+). At Lys292 the chain carries N6-succinyllysine. Zn(2+) contacts are provided by Cys302 and Cys307. Residues Tyr318, 354–356 (AGF), Glu370, Glu374, and Glu415 contribute to the substrate site. Residues 319-453 (PRVDPVVIMQ…SRAIAHQLIK (135 aa)) enclose the Nudix hydrolase domain. The Mg(2+) site is built by Ala354, Glu370, Glu374, and Glu415. A Nudix box motif is present at residues 355–376 (GFIEPGETIEDAVRREVEEESG). Positions 460-462 (PNL) match the Microbody targeting signal motif.

It belongs to the Nudix hydrolase family. NudC subfamily. Homodimer. Homodimerization is essential for its catalytic activity and protein stability. Interacts (via ANK repeats) with BLMH. Mg(2+) is required as a cofactor. It depends on Zn(2+) as a cofactor.

Its subcellular location is the cytoplasm. The protein resides in the peroxisome. The protein localises to the cytoplasmic granule. The catalysed reaction is a 5'-end NAD(+)-phospho-ribonucleoside in mRNA + H2O = a 5'-end phospho-adenosine-phospho-ribonucleoside in mRNA + beta-nicotinamide D-ribonucleotide + 2 H(+). It carries out the reaction NAD(+) + H2O = beta-nicotinamide D-ribonucleotide + AMP + 2 H(+). It catalyses the reaction NADH + H2O = reduced beta-nicotinamide D-ribonucleotide + AMP + 2 H(+). The enzyme catalyses NADPH + H2O = reduced beta-nicotinamide D-ribonucleotide + adenosine 2',5'-bisphosphate + 2 H(+). MRNA decapping enzyme that specifically removes the nicotinamide adenine dinucleotide (NAD) cap from a subset of mRNAs by hydrolyzing the diphosphate linkage to produce nicotinamide mononucleotide (NMN) and 5' monophosphate mRNA. The NAD-cap is present at the 5'-end of some RNAs; in contrast to the canonical N7 methylguanosine (m7G) cap, the NAD cap promotes mRNA decay. Preferentially acts on NAD-capped transcripts in response to nutrient stress. Also acts on free nicotinamide adenine dinucleotide molecules: hydrolyzes NAD(H) into NMN(H) and AMP, and NADPH into NMNH and 2',5'-ADP. May act to regulate the concentration of peroxisomal nicotinamide nucleotide cofactors required for oxidative metabolism in this organelle. Regulates the levels of circadian clock components PER1, PER2, PER3 and CRY2 in the liver. This is NAD-capped RNA hydrolase NUDT12 from Homo sapiens (Human).